Consider the following 175-residue polypeptide: ATP synthase subunit b (175 aa).

Residues 20 to 40 (LIFWTAVTFVIVLVILKKIAW) traverse the membrane as a helical segment.

The protein belongs to the ATPase B chain family. F-type ATPases have 2 components, F(1) - the catalytic core - and F(0) - the membrane proton channel. F(1) has five subunits: alpha(3), beta(3), gamma(1), delta(1), epsilon(1). F(0) has four main subunits: a(1), b(2) and c(10-14). The alpha and beta chains form an alternating ring which encloses part of the gamma chain. F(1) is attached to F(0) by a central stalk formed by the gamma and epsilon chains, while a peripheral stalk is formed by the delta and b chains.

The protein resides in the cell inner membrane. Functionally, f(1)F(0) ATP synthase produces ATP from ADP in the presence of a proton or sodium gradient. F-type ATPases consist of two structural domains, F(1) containing the extramembraneous catalytic core and F(0) containing the membrane proton channel, linked together by a central stalk and a peripheral stalk. During catalysis, ATP synthesis in the catalytic domain of F(1) is coupled via a rotary mechanism of the central stalk subunits to proton translocation. Its function is as follows. Component of the F(0) channel, it forms part of the peripheral stalk, linking F(1) to F(0). The polypeptide is ATP synthase subunit b (Chlorobaculum parvum (strain DSM 263 / NCIMB 8327) (Chlorobium vibrioforme subsp. thiosulfatophilum)).